Reading from the N-terminus, the 360-residue chain is Mitogen-activated protein kinase 14 (360 aa).

Residue Ser2 is modified to N-acetylserine. Ser2 bears the Phosphoserine mark. Residue Thr16 is modified to Phosphothreonine. In terms of domain architecture, Protein kinase spans 24–308 (YQNLSPVGSG…AAQALAHAYF (285 aa)). Residues 30–38 (VGSGAYGSV) and Lys53 each bind ATP. 2 positions are modified to N6-acetyllysine: Lys53 and Lys152. The active-site Proton acceptor is the Asp168. Thr180 carries the phosphothreonine; by MAP2K3, MAP2K4, MAP2K6 and autocatalysis modification. The TXY signature appears at 180–182 (TGY). A Phosphotyrosine; by MAP2K3, MAP2K4, MAP2K6 and autocatalysis modification is found at Tyr182. Thr263 carries the phosphothreonine modification. At Tyr323 the chain carries Phosphotyrosine; by ZAP70.

This sequence belongs to the protein kinase superfamily. CMGC Ser/Thr protein kinase family. MAP kinase subfamily. Component of a signaling complex containing at least AKAP13, PKN1, MAPK14, ZAK and MAP2K3. Within this complex, AKAP13 interacts directly with PKN1, which in turn recruits MAPK14, MAP2K3 and ZAK. Binds to a kinase interaction motif within the protein tyrosine phosphatase, PTPRR. This interaction retains MAPK14 in the cytoplasm and prevents nuclear accumulation. Interacts with SPAG9 and GADD45A. Interacts with CDC25B, CDC25C, DUSP1, DUSP10, DUSP16, NP60, SUPT20H and TAB1. Interacts with casein kinase II subunits CSNK2A1 and CSNK2B. Interacts with PPM1D. Interacts with CDK5RAP3; recruits PPM1D to MAPK14 and may regulate its dephosphorylation. Interacts with DUSP2; this interaction does not lead to catalytic activation of DUSP2 and dephosphrylation of MAPK14. Requires Mg(2+) as cofactor. In terms of processing, dually phosphorylated on Thr-180 and Tyr-182 by the MAP2Ks MAP2K3/MKK3, MAP2K4/MKK4 and MAP2K6/MKK6 in response to inflammatory citokines, environmental stress or growth factors, which activates the enzyme. Dual phosphorylation can also be mediated by TAB1-mediated autophosphorylation. TCR engagement in T-cells also leads to Tyr-323 phosphorylation by ZAP70. Dephosphorylated and inactivated by DUPS1, DUSP10 and DUSP16. PPM1D also mediates dephosphorylation and inactivation of MAPK14. Acetylated at Lys-53 and Lys-152 by KAT2B and EP300. Acetylation at Lys-53 increases the affinity for ATP and enhances kinase activity. Lys-53 and Lys-152 are deacetylated by HDAC3. Post-translationally, ubiquitinated. Ubiquitination leads to degradation by the proteasome pathway. In terms of tissue distribution, brain, heart, placenta, pancreas and skeletal muscle. Expressed to a lesser extent in lung, liver and kidney.

It is found in the cytoplasm. It localises to the nucleus. The enzyme catalyses L-seryl-[protein] + ATP = O-phospho-L-seryl-[protein] + ADP + H(+). It catalyses the reaction L-threonyl-[protein] + ATP = O-phospho-L-threonyl-[protein] + ADP + H(+). Activated by cell stresses such as DNA damage, heat shock, osmotic shock, anisomycin and sodium arsenite, as well as pro-inflammatory stimuli such as bacterial lipopolysaccharide (LPS) and interleukin-1. Activation occurs through dual phosphorylation of Thr-180 and Tyr-182 by either of two dual specificity kinases, MAP2K3/MKK3 or MAP2K6/MKK6, and potentially also MAP2K4/MKK4, as well as by TAB1-mediated autophosphorylation. MAPK14 phosphorylated on both Thr-180 and Tyr-182 is 10-20-fold more active than MAPK14 phosphorylated only on Thr-180, whereas MAPK14 phosphorylated on Tyr-182 alone is inactive. whereas Thr-180 is necessary for catalysis, Tyr-182 may be required for auto-activation and substrate recognition. Phosphorylated at Tyr-323 by ZAP70 in an alternative activation pathway in response to TCR signaling in T-cells. This alternative pathway is inhibited by GADD45A. Inhibited by dual specificity phosphatases, such as DUSP1, DUSP10, and DUSP16. Specifically inhibited by the binding of pyridinyl-imidazole compounds, which are cytokine-suppressive anti-inflammatory drugs (CSAID). Isoform Mxi2 is 100-fold less sensitive to these agents than the other isoforms and is not inhibited by DUSP1. Isoform Exip is not activated by MAP2K6. SB203580 is an inhibitor of MAPK14. In terms of biological role, serine/threonine kinase which acts as an essential component of the MAP kinase signal transduction pathway. MAPK14 is one of the four p38 MAPKs which play an important role in the cascades of cellular responses evoked by extracellular stimuli such as pro-inflammatory cytokines or physical stress leading to direct activation of transcription factors. Accordingly, p38 MAPKs phosphorylate a broad range of proteins and it has been estimated that they may have approximately 200 to 300 substrates each. Some of the targets are downstream kinases which are activated through phosphorylation and further phosphorylate additional targets. RPS6KA5/MSK1 and RPS6KA4/MSK2 can directly phosphorylate and activate transcription factors such as CREB1, ATF1, the NF-kappa-B isoform RELA/NFKB3, STAT1 and STAT3, but can also phosphorylate histone H3 and the nucleosomal protein HMGN1. RPS6KA5/MSK1 and RPS6KA4/MSK2 play important roles in the rapid induction of immediate-early genes in response to stress or mitogenic stimuli, either by inducing chromatin remodeling or by recruiting the transcription machinery. On the other hand, two other kinase targets, MAPKAPK2/MK2 and MAPKAPK3/MK3, participate in the control of gene expression mostly at the post-transcriptional level, by phosphorylating ZFP36 (tristetraprolin) and ELAVL1, and by regulating EEF2K, which is important for the elongation of mRNA during translation. MKNK1/MNK1 and MKNK2/MNK2, two other kinases activated by p38 MAPKs, regulate protein synthesis by phosphorylating the initiation factor EIF4E2. MAPK14 also interacts with casein kinase II, leading to its activation through autophosphorylation and further phosphorylation of TP53/p53. In the cytoplasm, the p38 MAPK pathway is an important regulator of protein turnover. For example, CFLAR is an inhibitor of TNF-induced apoptosis whose proteasome-mediated degradation is regulated by p38 MAPK phosphorylation. In a similar way, MAPK14 phosphorylates the ubiquitin ligase SIAH2, regulating its activity towards EGLN3. MAPK14 may also inhibit the lysosomal degradation pathway of autophagy by interfering with the intracellular trafficking of the transmembrane protein ATG9. Another function of MAPK14 is to regulate the endocytosis of membrane receptors by different mechanisms that impinge on the small GTPase RAB5A. In addition, clathrin-mediated EGFR internalization induced by inflammatory cytokines and UV irradiation depends on MAPK14-mediated phosphorylation of EGFR itself as well as of RAB5A effectors. Ectodomain shedding of transmembrane proteins is regulated by p38 MAPKs as well. In response to inflammatory stimuli, p38 MAPKs phosphorylate the membrane-associated metalloprotease ADAM17. Such phosphorylation is required for ADAM17-mediated ectodomain shedding of TGF-alpha family ligands, which results in the activation of EGFR signaling and cell proliferation. Another p38 MAPK substrate is FGFR1. FGFR1 can be translocated from the extracellular space into the cytosol and nucleus of target cells, and regulates processes such as rRNA synthesis and cell growth. FGFR1 translocation requires p38 MAPK activation. In the nucleus, many transcription factors are phosphorylated and activated by p38 MAPKs in response to different stimuli. Classical examples include ATF1, ATF2, ATF6, ELK1, PTPRH, DDIT3, TP53/p53 and MEF2C and MEF2A. The p38 MAPKs are emerging as important modulators of gene expression by regulating chromatin modifiers and remodelers. The promoters of several genes involved in the inflammatory response, such as IL6, IL8 and IL12B, display a p38 MAPK-dependent enrichment of histone H3 phosphorylation on 'Ser-10' (H3S10ph) in LPS-stimulated myeloid cells. This phosphorylation enhances the accessibility of the cryptic NF-kappa-B-binding sites marking promoters for increased NF-kappa-B recruitment. Phosphorylates CDC25B and CDC25C which is required for binding to 14-3-3 proteins and leads to initiation of a G2 delay after ultraviolet radiation. Phosphorylates TIAR following DNA damage, releasing TIAR from GADD45A mRNA and preventing mRNA degradation. The p38 MAPKs may also have kinase-independent roles, which are thought to be due to the binding to targets in the absence of phosphorylation. Protein O-Glc-N-acylation catalyzed by the OGT is regulated by MAPK14, and, although OGT does not seem to be phosphorylated by MAPK14, their interaction increases upon MAPK14 activation induced by glucose deprivation. This interaction may regulate OGT activity by recruiting it to specific targets such as neurofilament H, stimulating its O-Glc-N-acylation. Required in mid-fetal development for the growth of embryo-derived blood vessels in the labyrinth layer of the placenta. Also plays an essential role in developmental and stress-induced erythropoiesis, through regulation of EPO gene expression. Isoform MXI2 activation is stimulated by mitogens and oxidative stress and only poorly phosphorylates ELK1 and ATF2. Isoform EXIP may play a role in the early onset of apoptosis. Phosphorylates S100A9 at 'Thr-113'. Phosphorylates NLRP1 downstream of MAP3K20/ZAK in response to UV-B irradiation and ribosome collisions, promoting activation of the NLRP1 inflammasome and pyroptosis. Functionally, (Microbial infection) Activated by phosphorylation by M.tuberculosis EsxA in T-cells leading to inhibition of IFN-gamma production; phosphorylation is apparent within 15 minutes and is inhibited by kinase-specific inhibitors SB203580 and siRNA. This chain is Mitogen-activated protein kinase 14, found in Homo sapiens (Human).